Consider the following 298-residue polypeptide: Homoserine kinase (298 aa).

P92–T102 is a binding site for ATP.

This sequence belongs to the GHMP kinase family. Homoserine kinase subfamily.

The protein localises to the cytoplasm. It catalyses the reaction L-homoserine + ATP = O-phospho-L-homoserine + ADP + H(+). Its pathway is amino-acid biosynthesis; L-threonine biosynthesis; L-threonine from L-aspartate: step 4/5. In terms of biological role, catalyzes the ATP-dependent phosphorylation of L-homoserine to L-homoserine phosphate. This is Homoserine kinase (thrB) from Nostoc sp. (strain PCC 7120 / SAG 25.82 / UTEX 2576).